We begin with the raw amino-acid sequence, 392 residues long: Probable Ni/Fe-hydrogenase 2 b-type cytochrome subunit (392 aa).

At 1–11 (MSHDPQPLGGK) the chain is on the periplasmic side. The chain crosses the membrane as a helical span at residues 12 to 32 (IISKPVMIFGPLIVICMLLIV). At 33–34 (KR) the chain is on the cytoplasmic side. Residues 35–55 (LVFGLGSVSDLNGGFPWGVWI) form a helical membrane-spanning segment. Over 56 to 58 (AFD) the chain is Periplasmic. The chain crosses the membrane as a helical span at residues 59–79 (LLIGTGFACGGWALAWAVYVF). Over 80–90 (NRGQYHPLVRP) the chain is Cytoplasmic. A helical transmembrane segment spans residues 91-111 (ALLASLFGYSLGGLSITIDVG). Residues 112–133 (RYWNLPYFYIPGHFNVNSVLFE) lie on the Periplasmic side of the membrane. Residues 134 to 154 (TAVCMTIYIGVMALEFAPALF) traverse the membrane as a helical segment. Residues 155-168 (ERLGWKVSLQRLNK) are Cytoplasmic-facing. Residues 169–189 (VMFFIIALGALLPTMHQSSMG) form a helical membrane-spanning segment. At 190 to 207 (SLMISAGYKVHPLWQSYE) the chain is on the periplasmic side. The helical transmembrane segment at 208-228 (MLPLFSLLTAFIMGFSIVIFE) threads the bilayer. At 229–249 (GSLVQAGLRGNGPDEKSLFVK) the chain is on the cytoplasmic side. A helical membrane pass occupies residues 250–270 (LTNTISVLLAIFIVLRFGELI). The Periplasmic portion of the chain corresponds to 271-281 (YRDKLSLAFAG). Residues 282 to 302 (DFYSVMFWIEVLLMLFPLVVL) form a helical membrane-spanning segment. Topologically, residues 303 to 333 (RVAKLRNDSRMLFLSALSALLGCATWRLTYS) are cytoplasmic. A helical membrane pass occupies residues 334 to 354 (LVAFNPGGGYAYFPTWEELLI). Ser-355 is a topological domain (periplasmic). The helical transmembrane segment at 356–376 (IGFVAIEICAYIVLIRLLPIL) threads the bilayer. The Cytoplasmic segment spans residues 377-392 (PPLKQNDHNRHEASKA).

The protein belongs to the NrfD family.

It localises to the cell inner membrane. Probable b-type cytochrome. The sequence is that of Probable Ni/Fe-hydrogenase 2 b-type cytochrome subunit (hybB) from Escherichia coli (strain K12).